We begin with the raw amino-acid sequence, 103 residues long: Large ribosomal subunit protein bL21 (103 aa).

It belongs to the bacterial ribosomal protein bL21 family. Part of the 50S ribosomal subunit. Contacts protein L20.

In terms of biological role, this protein binds to 23S rRNA in the presence of protein L20. The polypeptide is Large ribosomal subunit protein bL21 (Klebsiella pneumoniae (strain 342)).